The following is a 644-amino-acid chain: uncharacterized protein (644 aa).

Disordered stretches follow at residues 1–35 (MSSH…EYCS) and 48–106 (GNSH…SHHN). Phosphoserine is present on Ser-28. Residues 58 to 70 (NGASSSNNNVAKS) show a composition bias toward low complexity. Polar residues predominate over residues 83–106 (YDSTSNSNEPISFNEPDSSNSHHN). 12 helical membrane passes run 131 to 151 (ILPL…PLLF), 190 to 210 (AAFG…YGTM), 218 to 238 (LVLF…LYQS), 245 to 265 (YFVL…TVVA), 286 to 306 (LNFA…GFIV), 314 to 334 (YVFY…WLIL), 398 to 418 (VLLA…MGLL), 435 to 455 (LILS…FPLL), 522 to 542 (VWNA…LAVA), 546 to 566 (VALF…PCVQ), 583 to 603 (AAFA…YAFV), and 614 to 634 (NMIF…IFFM).

It localises to the membrane. This is an uncharacterized protein from Schizosaccharomyces pombe (strain 972 / ATCC 24843) (Fission yeast).